A 524-amino-acid chain; its full sequence is Cytochrome P450 monooxygenase lnaC (524 aa).

Residues 16 to 36 (ALAVSCIAVSLFLLSPWIAYA) traverse the membrane as a helical segment. N-linked (GlcNAc...) asparagine glycosylation is present at asparagine 150. Residue cysteine 471 coordinates heme.

Belongs to the cytochrome P450 family. It depends on heme as a cofactor.

The protein localises to the membrane. It participates in secondary metabolite biosynthesis. Its function is as follows. Cytochrome P450 monooxygenase; part of the lna gene cluster that mediates the biosynthesis of diastereomeric piperazines. Lna and lnb clusters encode sets of enzymes that produce overlapping sets of previously undescribed metabolites such as piperazinomycin-like metabolites or morpholine. The lna and lnb biosynthetic pathways appear to be part of a signaling network that controls the formation of sclerotia, a resilient overwintering structure. One primary function of the non-canonical nonribosomal peptide synthetases lnaA and lnbA consists in the reduction of L-tyrosine. The presence in the clusters of tailoring enzymes such as the oxidoreductases lnaB, lnbB, lnaE or lnbE, as well as of the cytochrome P450 monooxygenases lnaC, lnaD, or lnbC, might explain formation of various diastereomeric piperazines. The polypeptide is Cytochrome P450 monooxygenase lnaC (Aspergillus flavus (strain ATCC 200026 / FGSC A1120 / IAM 13836 / NRRL 3357 / JCM 12722 / SRRC 167)).